The sequence spans 545 residues: Membrane protein insertase YidC (545 aa).

4 helical membrane passes run 350–370 (IIGN…AVLY), 424–444 (LPML…FASV), 461–481 (ADPY…QTYL), and 498–518 (PLVF…YWVV).

This sequence belongs to the OXA1/ALB3/YidC family. Type 1 subfamily. In terms of assembly, interacts with the Sec translocase complex via SecD. Specifically interacts with transmembrane segments of nascent integral membrane proteins during membrane integration.

The protein localises to the cell inner membrane. Its function is as follows. Required for the insertion and/or proper folding and/or complex formation of integral membrane proteins into the membrane. Involved in integration of membrane proteins that insert both dependently and independently of the Sec translocase complex, as well as at least some lipoproteins. Aids folding of multispanning membrane proteins. This Neisseria meningitidis serogroup C (strain 053442) protein is Membrane protein insertase YidC.